The chain runs to 436 residues: Adenylosuccinate synthetase (436 aa).

GTP is bound by residues Gly-12–Lys-18 and Gly-40–Thr-42. Residue Asp-13 is the Proton acceptor of the active site. The Mg(2+) site is built by Asp-13 and Gly-40. Residues Asp-13–Lys-16, Asn-38–His-41, Thr-128, Arg-142, Gln-223, Thr-238, and Arg-302 each bind IMP. Residue His-41 is the Proton donor of the active site. Residue Thr-298 to Arg-304 participates in substrate binding. Residues Arg-304, Lys-330 to Asp-332, and Ser-412 to Gly-414 contribute to the GTP site.

This sequence belongs to the adenylosuccinate synthetase family. Homodimer. The cofactor is Mg(2+).

It is found in the cytoplasm. It carries out the reaction IMP + L-aspartate + GTP = N(6)-(1,2-dicarboxyethyl)-AMP + GDP + phosphate + 2 H(+). Its pathway is purine metabolism; AMP biosynthesis via de novo pathway; AMP from IMP: step 1/2. In terms of biological role, plays an important role in the de novo pathway of purine nucleotide biosynthesis. Catalyzes the first committed step in the biosynthesis of AMP from IMP. This is Adenylosuccinate synthetase from Prochlorococcus marinus subsp. pastoris (strain CCMP1986 / NIES-2087 / MED4).